The chain runs to 388 residues: Succinate--CoA ligase [ADP-forming] subunit beta (388 aa).

An ATP-grasp domain is found at 9 to 244 (KQLFARYGLP…PSQEDSREAH (236 aa)). ATP is bound by residues Lys-46, 53–55 (GRG), Glu-99, Thr-102, and Glu-107. Positions 199 and 213 each coordinate Mg(2+). Residues Asn-264 and 321–323 (GIV) contribute to the substrate site.

It belongs to the succinate/malate CoA ligase beta subunit family. Heterotetramer of two alpha and two beta subunits. The cofactor is Mg(2+).

The enzyme catalyses succinate + ATP + CoA = succinyl-CoA + ADP + phosphate. It carries out the reaction GTP + succinate + CoA = succinyl-CoA + GDP + phosphate. It participates in carbohydrate metabolism; tricarboxylic acid cycle; succinate from succinyl-CoA (ligase route): step 1/1. Succinyl-CoA synthetase functions in the citric acid cycle (TCA), coupling the hydrolysis of succinyl-CoA to the synthesis of either ATP or GTP and thus represents the only step of substrate-level phosphorylation in the TCA. The beta subunit provides nucleotide specificity of the enzyme and binds the substrate succinate, while the binding sites for coenzyme A and phosphate are found in the alpha subunit. This is Succinate--CoA ligase [ADP-forming] subunit beta from Pectobacterium atrosepticum (strain SCRI 1043 / ATCC BAA-672) (Erwinia carotovora subsp. atroseptica).